We begin with the raw amino-acid sequence, 524 residues long: MDITNRQAVLKNFLGNSPDWYKLAIMGFLIINPLVFFFVSPFVAGWMLVIEFIFTLAMALKCYPLQPGGLLAIQAVAIGMTSPHQVAEEIANNLEVLLLLVFMVAGIYFMKQLLLFVFTKLLLNIRSKTILSLAFCLASAFLSAFLDALTVIAVVISVSVGFYTIYHNVTSNHSDKDITDDSGIDNQDSHETLEQFRAFLRSLMMHAGVGTALGGVMTMVGEPQNLIIAKSAGWNFADFFIRMLPVTLPVFIFGLLVCLLVEKFKLFGYGAQLPERVRQVLTEYDQQASAKRTKQEKMKLIVQAIIGVWLVLALALHLAEVGLVGLSVIILATSFCGITNEHSLGKAFQEALPFTALLTVFFAVVAVIIEQSLFTPIIQFVLQASPSAQLSLFYLFNGLLSSVSDNVFVGTVYINEARSAFEHGIVSLQQFELLAVAINTGTNLPSVATPNGQAAFLFLLTSALAPLIRLSYGRMVYMALPYTLVMTIVGLLGVEFLLVPMTEWLTQAGWISLPHITNGVAIPH.

The next 9 membrane-spanning stretches (helical) occupy residues 13–33, 98–118, 140–160, 239–259, 304–324, 325–345, 358–378, 448–468, and 479–499; these read FLGN…IINP, LLLV…LFVF, AFLS…SVSV, FFIR…LVCL, AIIG…VGLV, GLSV…HSLG, LTVF…TPII, ATPN…APLI, and ALPY…FLLV.

Belongs to the NhaB Na(+)/H(+) (TC 2.A.34) antiporter family.

It is found in the cell inner membrane. It carries out the reaction 2 Na(+)(in) + 3 H(+)(out) = 2 Na(+)(out) + 3 H(+)(in). Na(+)/H(+) antiporter that extrudes sodium in exchange for external protons. The chain is Na(+)/H(+) antiporter NhaB from Yersinia pseudotuberculosis serotype I (strain IP32953).